Here is a 65-residue protein sequence, read N- to C-terminus: MNKTLLDILVCPVTKASLTLSKDGTELISKVGGMAYPVRDGIPVLLETEARTLTADERLDSGSAK.

The protein belongs to the UPF0434 family.

The chain is UPF0434 protein Mmwyl1_2153 from Marinomonas sp. (strain MWYL1).